Here is a 265-residue protein sequence, read N- to C-terminus: MKIAIAGASGRMGRMLIEAVLNDADAQLVGALDRAGSPFLGQDAGAFLGKDTGVKLTDDLDAVFAQAEYLIDFTRPEGTMAHVEAALRHDVKLVIGTTGFTAEQKADLQAAAARIGIVFAANMSVGVNVTLKLLEFAAKHFSHGYDIEIIEAHHRHKVDAPSGTALMMGEAVAGALGRSLDDCAVYGRHGVTGERDPSSIGFAAVRGGDIVGDHTVLFAGIGERIEITHKSSSRVSYAQGALRAVRFLSARGAGLFDMQDVLGLR.

Residues 7–12 and Asp-33 contribute to the NAD(+) site; that span reads GASGRM. Arg-34 is a binding site for NADP(+). NAD(+) contacts are provided by residues 96–98 and 120–123; these read GTT and AANM. His-153 acts as the Proton donor/acceptor in catalysis. Residue His-154 coordinates (S)-2,3,4,5-tetrahydrodipicolinate. The active-site Proton donor is Lys-157. Residue 163–164 participates in (S)-2,3,4,5-tetrahydrodipicolinate binding; it reads GT.

This sequence belongs to the DapB family.

It localises to the cytoplasm. It catalyses the reaction (S)-2,3,4,5-tetrahydrodipicolinate + NAD(+) + H2O = (2S,4S)-4-hydroxy-2,3,4,5-tetrahydrodipicolinate + NADH + H(+). It carries out the reaction (S)-2,3,4,5-tetrahydrodipicolinate + NADP(+) + H2O = (2S,4S)-4-hydroxy-2,3,4,5-tetrahydrodipicolinate + NADPH + H(+). It functions in the pathway amino-acid biosynthesis; L-lysine biosynthesis via DAP pathway; (S)-tetrahydrodipicolinate from L-aspartate: step 4/4. In terms of biological role, catalyzes the conversion of 4-hydroxy-tetrahydrodipicolinate (HTPA) to tetrahydrodipicolinate. The protein is 4-hydroxy-tetrahydrodipicolinate reductase of Burkholderia orbicola (strain MC0-3).